Here is a 521-residue protein sequence, read N- to C-terminus: Anthranilate synthase component 1 (521 aa).

Residues Thr40 and 292 to 294 (PYM) contribute to the L-tryptophan site. 329–330 (GT) serves as a coordination point for chorismate. Glu362 contacts Mg(2+). Chorismate is bound by residues Tyr450, Arg470, 484–486 (GAG), and Gly486. Glu499 is a Mg(2+) binding site.

It belongs to the anthranilate synthase component I family. Heterotetramer consisting of two non-identical subunits: a beta subunit (TrpG) and a large alpha subunit (TrpE). Requires Mg(2+) as cofactor.

It catalyses the reaction chorismate + L-glutamine = anthranilate + pyruvate + L-glutamate + H(+). It participates in amino-acid biosynthesis; L-tryptophan biosynthesis; L-tryptophan from chorismate: step 1/5. With respect to regulation, feedback inhibited by tryptophan. Functionally, part of a heterotetrameric complex that catalyzes the two-step biosynthesis of anthranilate, an intermediate in the biosynthesis of L-tryptophan. In the first step, the glutamine-binding beta subunit (TrpG) of anthranilate synthase (AS) provides the glutamine amidotransferase activity which generates ammonia as a substrate that, along with chorismate, is used in the second step, catalyzed by the large alpha subunit of AS (TrpE) to produce anthranilate. In the absence of TrpG, TrpE can synthesize anthranilate directly from chorismate and high concentrations of ammonia. This chain is Anthranilate synthase component 1 (trpE), found in Buchnera aphidicola subsp. Acyrthosiphon pisum (strain APS) (Acyrthosiphon pisum symbiotic bacterium).